The sequence spans 170 residues: Probable calcium-binding protein CML29 (170 aa).

3 EF-hand domains span residues 27 to 62 (SYISSLVEAFQAFDSDNDGLVTAPELRGLLASLGLD), 63 to 98 (KPEHEVRDMLARADADRDGKLSVEELLDVMNAGQLG), and 138 to 170 (ASVEDCMEIIACMDGDGDGAISVEEFRLMAQLL). Residues Asp40, Asp42, Asp44, Glu51, Asp76, Asp78, Asp80, Lys82, Glu87, Asp151, Asp153, Asp155, and Glu162 each contribute to the Ca(2+) site.

In terms of biological role, potential calcium sensor. The chain is Probable calcium-binding protein CML29 (CML29) from Oryza sativa subsp. japonica (Rice).